The sequence spans 102 residues: Co-chaperonin GroES (102 aa).

The protein belongs to the GroES chaperonin family. In terms of assembly, heptamer of 7 subunits arranged in a ring. Interacts with the chaperonin GroEL.

It localises to the cytoplasm. In terms of biological role, together with the chaperonin GroEL, plays an essential role in assisting protein folding. The GroEL-GroES system forms a nano-cage that allows encapsulation of the non-native substrate proteins and provides a physical environment optimized to promote and accelerate protein folding. GroES binds to the apical surface of the GroEL ring, thereby capping the opening of the GroEL channel. This Streptomyces avermitilis (strain ATCC 31267 / DSM 46492 / JCM 5070 / NBRC 14893 / NCIMB 12804 / NRRL 8165 / MA-4680) protein is Co-chaperonin GroES.